The chain runs to 245 residues: Probable histone chaperone asf-1-like protein (245 aa).

Over residues 157-166 the composition is skewed to acidic residues; the sequence is EDPVAEPVDE. The disordered stretch occupies residues 157–245; the sequence is EDPVAEPVDE…SGDVEMGDKH (89 aa). Residues 167-183 show a composition bias toward basic and acidic residues; that stretch reads EANKVFDEDDLMPLHDD. Acidic residues predominate over residues 184–206; it reads GQDDDEEEEDDDETGPNTEEVDL. The segment covering 215–245 has biased composition (basic and acidic residues); sequence ANAHDGTEQKNGEESMEHDGASGDVEMGDKH.

This sequence belongs to the ASF1 family. Interacts with histone H3 and histone H4.

The protein resides in the nucleus. Functionally, histone chaperone that facilitates histone deposition and histone exchange and removal during nucleosome assembly and disassembly. The polypeptide is Probable histone chaperone asf-1-like protein (asfl-1) (Caenorhabditis elegans).